Here is an 800-residue protein sequence, read N- to C-terminus: Fibroblast growth factor receptor 4 (800 aa).

The N-terminal stretch at 1-16 (MWLLLALLSIFQETPA) is a signal peptide. 3 Ig-like C2-type domains span residues 17-115 (FSLE…LIMD), 148-236 (PQRM…YLLD), and 245-345 (PILQ…AWLT). Over 17–367 (FSLEASEEME…TATSEARYTD (351 aa)) the chain is Extracellular. Cys54 and Cys98 are joined by a disulfide. Asn109 is a glycosylation site (N-linked (GlcNAc...) asparagine). A disulfide bridge links Cys168 with Cys220. N-linked (GlcNAc...) asparagine glycosylation is found at Asn254, Asn286, and Asn307. Residues Cys267 and Cys329 are joined by a disulfide bond. Residues 368-388 (IILYVSGSLALVLLLLLAGVY) traverse the membrane as a helical segment. The Cytoplasmic portion of the chain corresponds to 389 to 800 (HRQAIHGHHS…PFPFPEAQTT (412 aa)). The 289-residue stretch at 465-753 (LVLGKPLGEG…VLLAVSEEYL (289 aa)) folds into the Protein kinase domain. ATP-binding positions include 471 to 479 (LGEGCFGQV) and Lys501. Residue Ser571 is modified to Phosphoserine. Asp610 (proton acceptor) is an active-site residue. Tyr640, Tyr641, and Tyr752 each carry phosphotyrosine; by autocatalysis. The tract at residues 768 to 800 (DASSTCSSSDSVFSHDPLPLEPSPFPFPEAQTT) is disordered. The span at 770–781 (SSTCSSSDSVFS) shows a compositional bias: low complexity.

It belongs to the protein kinase superfamily. Tyr protein kinase family. Fibroblast growth factor receptor subfamily. As to quaternary structure, monomer. Homodimer after ligand binding. Interacts with FGF1, FGF2, FGF4, FGF6, FGF8, FGF9, FGF16, FGF17, FGF18, FGF19, FGF21 and FGF23 (in vitro). Binding affinity for FGF family members is enhanced by interactions between FGFs and heparan sulfate proteoglycans. Interacts with KLB; this strongly increases the affinity for FGF19 and FGF23. Affinity for FGF19 is strongly increased by KLB and sulfated glycosaminoglycans. KLB and KL both interact with the core-glycosylated FGFR4 in the endoplasmic reticulum and promote its degradation, so that only FGFR4 with fully mature N-glycans is expressed at the cell surface. Identified in a complex with NCAM1, CDH2, PLCG1, FRS2, SRC, SHC1, GAP43 and CTTN. Interacts with MMP14 and HIP1. Interacts with STAT3. Post-translationally, N-glycosylated. Full maturation of the glycan chains in the Golgi is essential for high affinity interaction with FGF19. In terms of processing, ubiquitinated. Subject to proteasomal degradation when not fully glycosylated. Autophosphorylated. Binding of FGF family members together with heparan sulfate proteoglycan or heparin promotes receptor dimerization and autophosphorylation on tyrosine residues. Autophosphorylation occurs in trans between the two FGFR molecules present in the dimer.

The protein localises to the cell membrane. The protein resides in the endosome. It localises to the endoplasmic reticulum. It catalyses the reaction L-tyrosyl-[protein] + ATP = O-phospho-L-tyrosyl-[protein] + ADP + H(+). With respect to regulation, present in an inactive conformation in the absence of bound ligand. Ligand binding leads to dimerization and activation by autophosphorylation on tyrosine residues. Tyrosine-protein kinase that acts as a cell-surface receptor for fibroblast growth factors and plays a role in the regulation of cell proliferation, differentiation and migration, and in regulation of lipid metabolism, bile acid biosynthesis, glucose uptake, vitamin D metabolism and phosphate homeostasis. Required for normal down-regulation of the expression of CYP7A1, the rate-limiting enzyme in bile acid synthesis, in response to FGF19. Phosphorylates PLCG1 and FRS2. Ligand binding leads to the activation of several signaling cascades. Activation of PLCG1 leads to the production of the cellular signaling molecules diacylglycerol and inositol 1,4,5-trisphosphate. Phosphorylation of FRS2 triggers recruitment of GRB2, GAB1, PIK3R1 and SOS1, and mediates activation of RAS, MAPK1/ERK2, MAPK3/ERK1 and the MAP kinase signaling pathway, as well as of the AKT1 signaling pathway. Promotes SRC-dependent phosphorylation of the matrix protease MMP14 and its lysosomal degradation. FGFR4 signaling is down-regulated by receptor internalization and degradation; MMP14 promotes internalization and degradation of FGFR4. This is Fibroblast growth factor receptor 4 (Fgfr4) from Rattus norvegicus (Rat).